The following is a 227-amino-acid chain: 27 kDa glycoprotein (227 aa).

Residues 1-17 form the signal peptide; it reads MMWKTVLITIFAAGVLA. 2 N-linked (GlcNAc...) asparagine glycosylation sites follow: Asn118 and Asn173.

The protein belongs to the UPF0408 family. As to expression, expressed in the subesophageal body, fat bodies, hemocytes, midgut and Malpighian tubules. Not expressed in silk glands.

It is found in the secreted. The chain is 27 kDa glycoprotein from Bombyx mori (Silk moth).